Here is a 569-residue protein sequence, read N- to C-terminus: Glucose-6-phosphate isomerase, cytosolic 2 (569 aa).

Glu-360 functions as the Proton donor in the catalytic mechanism. Catalysis depends on residues His-391 and Lys-516.

The protein belongs to the GPI family. Homodimer.

The protein localises to the cytoplasm. The enzyme catalyses alpha-D-glucose 6-phosphate = beta-D-fructose 6-phosphate. Its pathway is carbohydrate degradation; glycolysis; D-glyceraldehyde 3-phosphate and glycerone phosphate from D-glucose: step 2/4. The chain is Glucose-6-phosphate isomerase, cytosolic 2 (PGIC2) from Clarkia concinna (Red ribbons).